The primary structure comprises 154 residues: Prefoldin subunit 2 (154 aa).

2 disordered regions span residues 1–20 (MADS…GKGA) and 126–154 (LMGE…VLVS). The span at 9–18 (GKSGGSGAGK) shows a compositional bias: gly residues. Positions 126 to 139 (LMGEDEKPAAKENS) are enriched in basic and acidic residues. Residues 140 to 154 (EGAGAKASSAGVLVS) show a composition bias toward low complexity.

Belongs to the prefoldin subunit beta family. Heterohexamer of two PFD-alpha type and four PFD-beta type subunits. Component of the PAQosome complex which is responsible for the biogenesis of several protein complexes and which consists of R2TP complex members RUVBL1, RUVBL2, RPAP3 and PIH1D1, URI complex members PFDN2, PFDN6, PDRG1, UXT and URI1 as well as ASDURF, POLR2E and DNAAF10/WDR92. Interacts with URI1; the interaction is phosphorylation-dependent and occurs in a growth-dependent manner.

Its subcellular location is the nucleus. The protein resides in the cytoplasm. It localises to the mitochondrion. In terms of biological role, binds specifically to cytosolic chaperonin (c-CPN) and transfers target proteins to it. Binds to nascent polypeptide chain and promotes folding in an environment in which there are many competing pathways for nonnative proteins. The sequence is that of Prefoldin subunit 2 (Pfdn2) from Mus musculus (Mouse).